The following is a 268-amino-acid chain: Hydroxyethylthiazole kinase (268 aa).

A substrate-binding site is contributed by methionine 45. Residues arginine 121 and threonine 167 each contribute to the ATP site. Glycine 194 lines the substrate pocket.

This sequence belongs to the Thz kinase family. It depends on Mg(2+) as a cofactor.

The enzyme catalyses 5-(2-hydroxyethyl)-4-methylthiazole + ATP = 4-methyl-5-(2-phosphooxyethyl)-thiazole + ADP + H(+). It participates in cofactor biosynthesis; thiamine diphosphate biosynthesis; 4-methyl-5-(2-phosphoethyl)-thiazole from 5-(2-hydroxyethyl)-4-methylthiazole: step 1/1. In terms of biological role, catalyzes the phosphorylation of the hydroxyl group of 4-methyl-5-beta-hydroxyethylthiazole (THZ). This Bacillus anthracis (strain A0248) protein is Hydroxyethylthiazole kinase.